Reading from the N-terminus, the 837-residue chain is Ribosome-releasing factor 2, mitochondrial (837 aa).

Residues 1–29 (MFSINARTKVPIWVPFIARKGFSMSTRQL) constitute a mitochondrion transit peptide. A tr-type G domain is found at 40–331 (LNTRNIGIIA…GVVDYLPSPL (292 aa)). Residues 49 to 56 (AHIDAGKT), 113 to 117 (DTPGH), and 167 to 170 (NKMD) each bind GTP. The disordered stretch occupies residues 338-359 (ITASTSKVSKKQKQKKNSKVSS). The span at 345-355 (VSKKQKQKKNS) shows a compositional bias: basic residues.

This sequence belongs to the TRAFAC class translation factor GTPase superfamily. Classic translation factor GTPase family. EF-G/EF-2 subfamily.

It localises to the mitochondrion. Its function is as follows. Mitochondrial GTPase that mediates the disassembly of ribosomes from messenger RNA at the termination of mitochondrial protein biosynthesis. Not involved in the GTP-dependent ribosomal translocation step during translation elongation. The polypeptide is Ribosome-releasing factor 2, mitochondrial (Meyerozyma guilliermondii (strain ATCC 6260 / CBS 566 / DSM 6381 / JCM 1539 / NBRC 10279 / NRRL Y-324) (Yeast)).